Consider the following 61-residue polypeptide: Metallothionein-2 (61 aa).

Methionine 1 is subject to N-acetylmethionine. The tract at residues 1–29 (MDPNCSCVAGDSCTCAGSCKCKECKCTSC) is beta. Positions 5, 7, 13, 15, 19, 21, 24, 26, 29, 33, 34, 36, 37, 41, 44, 48, 50, 57, 59, and 60 each coordinate a divalent metal cation. Residues 20–25 (KCKECK) form an antigenic epitope region. Positions 30–61 (KKSCCSCCPVGCAKCAQGCICKGASDKCNCCA) are alpha.

It belongs to the metallothionein superfamily. Type 1 family.

In terms of biological role, metallothioneins have a high content of cysteine residues that bind various heavy metals; these proteins are transcriptionally regulated by both heavy metals and glucocorticoids. The protein is Metallothionein-2 (MT2) of Macaca fascicularis (Crab-eating macaque).